The primary structure comprises 369 residues: MGVKTFQFPFAEQLEKVAEQFPTFQILNEEGEVVNEEAMPELSDEQLKELMRRMVYTRILDQRSISLNRQGRLGFYAPTAGQEASQIASHFALEKEDFILPGYRDVPQIIWHGLPLYQAFLFSRGHFHGNQIPEGVNVLPPQIIIGAQYIQAAGVALGLKMRGKKAVAITYTGDGGTSQGDFYEGINFAGAFKAPAIFVVQNNRFAISTPVEKQTVAKTLAQKAVAAGIPGIQVDGMDPLAVYAAVKAARERAINGEGPTLIETLCFRYGPHTMSGDDPTRYRSKELENEWAKKDPLVRFRKFLEAKGLWSEEEENNVIEQAKEEIKEAIKKADETPKQKVTDLISIMFEELPFNLKEQYEIYKEKESK.

As to quaternary structure, heterodimer of an alpha and a beta chain. Thiamine diphosphate serves as cofactor.

It carries out the reaction N(6)-[(R)-lipoyl]-L-lysyl-[protein] + pyruvate + H(+) = N(6)-[(R)-S(8)-acetyldihydrolipoyl]-L-lysyl-[protein] + CO2. In terms of biological role, the pyruvate dehydrogenase complex catalyzes the overall conversion of pyruvate to acetyl-CoA and CO(2). It contains multiple copies of three enzymatic components: pyruvate dehydrogenase (E1), dihydrolipoamide acetyltransferase (E2) and lipoamide dehydrogenase (E3). The chain is Pyruvate dehydrogenase E1 component subunit alpha (pdhA) from Geobacillus stearothermophilus (Bacillus stearothermophilus).